The chain runs to 1526 residues: uncharacterized protein (1526 aa).

WD repeat units follow at residues 334–376 (CTKE…EHIS), 862–901 (KILGSVLTVAFSPDGKLFATGDSGGIVRFWEAATGKELLT), 904–945 (GHNS…KTFK), 946–985 (GHTSRVRSVVFSPNSLMLASGSSDQTVRLWDISSGECLYI), 988–1027 (GHTGWVYSVAFNLDGSMLATGSGDQTVRLWDISSSQCFYI), 1030–1069 (GHTSCVRSVVFSSDGAMLASGSDDQTVRLWDISSGNCLYT), 1072–1111 (GHTSCVRSVVFSPDGAMLASGGDDQIVRLWDISSGNCLYT), 1114–1153 (GYTSWVRFLVFSPNGVTLANGSSDQIVRLWDISSKKCLYT), 1156–1195 (GHTNWVNAVAFSPDGATLASGSGDQTVRLWDISSSKCLYI), 1198–1237 (GHTSWVNSVVFNPDGSTLASGSSDQTVRLWEINSSKCLCT), 1240–1279 (GHTSWVNSVVFNPDGSMLASGSSDKTVRLWDISSSKCLHT), 1282–1321 (GHTNWVNSVAFNPDGSMLASGSGDQTVRLWEISSSKCLHT), 1324–1363 (GHTSWVSSVTFSPDGTMLASGSDDQTVRLWSISSGECLYT), 1366–1405 (GHTNWVGSVIFSPDGAILASGSGDQTVRLWSISSGKCLYT), 1408–1447 (GHNNWVGSIVFSPDGTLLASGSDDQTVRLWNISSGECLYT), and 1450–1491 (GHIN…KTLK). One can recognise a Pentapeptide repeat domain in the interval 823–862 (MVLEGRDLSHTVIIGADFTNTSLRCVNFTEANLAYSVFTK).

This is an uncharacterized protein from Nostoc sp. (strain PCC 7120 / SAG 25.82 / UTEX 2576).